The primary structure comprises 497 residues: Probable malate:quinone oxidoreductase (497 aa).

Belongs to the MQO family. The cofactor is FAD.

The catalysed reaction is (S)-malate + a quinone = a quinol + oxaloacetate. It participates in carbohydrate metabolism; tricarboxylic acid cycle; oxaloacetate from (S)-malate (quinone route): step 1/1. The sequence is that of Probable malate:quinone oxidoreductase from Wolinella succinogenes (strain ATCC 29543 / DSM 1740 / CCUG 13145 / JCM 31913 / LMG 7466 / NCTC 11488 / FDC 602W) (Vibrio succinogenes).